Here is a 528-residue protein sequence, read N- to C-terminus: tRNA-2-methylthio-N(6)-dimethylallyladenosine synthase (528 aa).

In terms of domain architecture, MTTase N-terminal spans R19–H134. Positions 28, 63, 97, 171, 175, and 178 each coordinate [4Fe-4S] cluster. The 231-residue stretch at R157–E387 folds into the Radical SAM core domain. Residues Q390–D460 enclose the TRAM domain.

It belongs to the methylthiotransferase family. MiaB subfamily. As to quaternary structure, monomer. The cofactor is [4Fe-4S] cluster.

It is found in the cytoplasm. It catalyses the reaction N(6)-dimethylallyladenosine(37) in tRNA + (sulfur carrier)-SH + AH2 + 2 S-adenosyl-L-methionine = 2-methylsulfanyl-N(6)-dimethylallyladenosine(37) in tRNA + (sulfur carrier)-H + 5'-deoxyadenosine + L-methionine + A + S-adenosyl-L-homocysteine + 2 H(+). Its function is as follows. Catalyzes the methylthiolation of N6-(dimethylallyl)adenosine (i(6)A), leading to the formation of 2-methylthio-N6-(dimethylallyl)adenosine (ms(2)i(6)A) at position 37 in tRNAs that read codons beginning with uridine. The sequence is that of tRNA-2-methylthio-N(6)-dimethylallyladenosine synthase from Clavibacter michiganensis subsp. michiganensis (strain NCPPB 382).